We begin with the raw amino-acid sequence, 327 residues long: tRNA dimethylallyltransferase (327 aa).

14-21 (GPTASGKT) provides a ligand contact to ATP. Position 16–21 (16–21 (TASGKT)) interacts with substrate. Interaction with substrate tRNA stretches follow at residues 39-42 (DSAL) and 163-167 (QRIQR).

The protein belongs to the IPP transferase family. In terms of assembly, monomer. It depends on Mg(2+) as a cofactor.

It catalyses the reaction adenosine(37) in tRNA + dimethylallyl diphosphate = N(6)-dimethylallyladenosine(37) in tRNA + diphosphate. Catalyzes the transfer of a dimethylallyl group onto the adenine at position 37 in tRNAs that read codons beginning with uridine, leading to the formation of N6-(dimethylallyl)adenosine (i(6)A). This Xanthomonas campestris pv. campestris (strain 8004) protein is tRNA dimethylallyltransferase.